The primary structure comprises 145 residues: MRAVVQRVTRAKCTVDGAVTGETGPGLLVLLGVAPQDSADTARTLAAKLAKLRIFNDDAGKMNRSVQDIGGGVLSISQFTLFADTSRGNRPSFTGAASPKQGRELYAEFNAALRALGLPVGEGVFGAHMDIELVNDGPVTVTLDI.

The Gly-cisPro motif, important for rejection of L-amino acids motif lies at 137–138 (GP).

Belongs to the DTD family. In terms of assembly, homodimer.

The protein resides in the cytoplasm. It carries out the reaction glycyl-tRNA(Ala) + H2O = tRNA(Ala) + glycine + H(+). The enzyme catalyses a D-aminoacyl-tRNA + H2O = a tRNA + a D-alpha-amino acid + H(+). Its function is as follows. An aminoacyl-tRNA editing enzyme that deacylates mischarged D-aminoacyl-tRNAs. Also deacylates mischarged glycyl-tRNA(Ala), protecting cells against glycine mischarging by AlaRS. Acts via tRNA-based rather than protein-based catalysis; rejects L-amino acids rather than detecting D-amino acids in the active site. By recycling D-aminoacyl-tRNA to D-amino acids and free tRNA molecules, this enzyme counteracts the toxicity associated with the formation of D-aminoacyl-tRNA entities in vivo and helps enforce protein L-homochirality. In Deinococcus radiodurans (strain ATCC 13939 / DSM 20539 / JCM 16871 / CCUG 27074 / LMG 4051 / NBRC 15346 / NCIMB 9279 / VKM B-1422 / R1), this protein is D-aminoacyl-tRNA deacylase.